A 262-amino-acid polypeptide reads, in one-letter code: Phosphatidylserine decarboxylase proenzyme (262 aa).

Catalysis depends on charge relay system; for autoendoproteolytic cleavage activity residues D86, H142, and S226. S226 functions as the Schiff-base intermediate with substrate; via pyruvic acid; for decarboxylase activity in the catalytic mechanism. At S226 the chain carries Pyruvic acid (Ser); by autocatalysis.

Belongs to the phosphatidylserine decarboxylase family. PSD-B subfamily. Prokaryotic type I sub-subfamily. As to quaternary structure, heterodimer of a large membrane-associated beta subunit and a small pyruvoyl-containing alpha subunit. The cofactor is pyruvate. Post-translationally, is synthesized initially as an inactive proenzyme. Formation of the active enzyme involves a self-maturation process in which the active site pyruvoyl group is generated from an internal serine residue via an autocatalytic post-translational modification. Two non-identical subunits are generated from the proenzyme in this reaction, and the pyruvate is formed at the N-terminus of the alpha chain, which is derived from the carboxyl end of the proenzyme. The autoendoproteolytic cleavage occurs by a canonical serine protease mechanism, in which the side chain hydroxyl group of the serine supplies its oxygen atom to form the C-terminus of the beta chain, while the remainder of the serine residue undergoes an oxidative deamination to produce ammonia and the pyruvoyl prosthetic group on the alpha chain. During this reaction, the Ser that is part of the protease active site of the proenzyme becomes the pyruvoyl prosthetic group, which constitutes an essential element of the active site of the mature decarboxylase.

It localises to the cell membrane. The enzyme catalyses a 1,2-diacyl-sn-glycero-3-phospho-L-serine + H(+) = a 1,2-diacyl-sn-glycero-3-phosphoethanolamine + CO2. It participates in phospholipid metabolism; phosphatidylethanolamine biosynthesis; phosphatidylethanolamine from CDP-diacylglycerol: step 2/2. Functionally, catalyzes the formation of phosphatidylethanolamine (PtdEtn) from phosphatidylserine (PtdSer). In Bacillus mycoides (strain KBAB4) (Bacillus weihenstephanensis), this protein is Phosphatidylserine decarboxylase proenzyme.